Reading from the N-terminus, the 334-residue chain is L-lactate dehydrogenase B-B chain (334 aa).

NAD(+)-binding positions include 30-58 and R100; that span reads GQVG…VEDK. Positions 107, 139, and 170 each coordinate substrate. N139 provides a ligand contact to NAD(+). H194 (proton acceptor) is an active-site residue. T249 serves as a coordination point for substrate.

The protein belongs to the LDH/MDH superfamily. LDH family. As to quaternary structure, homotetramer.

The protein localises to the cytoplasm. The catalysed reaction is (S)-lactate + NAD(+) = pyruvate + NADH + H(+). Its pathway is fermentation; pyruvate fermentation to lactate; (S)-lactate from pyruvate: step 1/1. The chain is L-lactate dehydrogenase B-B chain from Danio rerio (Zebrafish).